Reading from the N-terminus, the 201-residue chain is Small ribosomal subunit protein uS4c (201 aa).

The S4 RNA-binding domain occupies 91 to 151 (MRLDNIIFQL…TKNPEELRTI (61 aa)).

This sequence belongs to the universal ribosomal protein uS4 family. As to quaternary structure, part of the 30S ribosomal subunit. Contacts protein S5. The interaction surface between S4 and S5 is involved in control of translational fidelity.

The protein resides in the plastid. It localises to the chloroplast. Its function is as follows. One of the primary rRNA binding proteins, it binds directly to 16S rRNA where it nucleates assembly of the body of the 30S subunit. With S5 and S12 plays an important role in translational accuracy. The sequence is that of Small ribosomal subunit protein uS4c (rps4) from Welwitschia mirabilis (Tree tumbo).